Reading from the N-terminus, the 255-residue chain is 5-oxoprolinase subunit A (255 aa).

Belongs to the LamB/PxpA family. Forms a complex composed of PxpA, PxpB and PxpC.

The catalysed reaction is 5-oxo-L-proline + ATP + 2 H2O = L-glutamate + ADP + phosphate + H(+). Functionally, catalyzes the cleavage of 5-oxoproline to form L-glutamate coupled to the hydrolysis of ATP to ADP and inorganic phosphate. This is 5-oxoprolinase subunit A from Pyrococcus horikoshii (strain ATCC 700860 / DSM 12428 / JCM 9974 / NBRC 100139 / OT-3).